The primary structure comprises 1374 residues: F-actin-uncapping protein LRRC16A (1374 aa).

Methionine 1 carries the post-translational modification N-acetylmethionine. Serine 122 bears the Phosphoserine mark. LRR repeat units follow at residues 245 to 269 (SNRLEELVLENAGLRIDFAQKLAGA), 275 to 298 (NSGLHTINLAGNSLEDRGVSSLSI), 304 to 327 (PKGLKHLNLSKTSLSPKGVNSLCQ), 336 to 363 (ASTLTHLDLSGNALRGDDLSHMYNFLAQ), 391 to 418 (LQCLAVLNLSRSVFSHRKGKEVPPSFKQ), 423 to 447 (SLALIQINLSGTKLSPEPLKALLLG), 485 to 510 (IHNITSLDISDNGLESDLSTLIVWLS), 547 to 570 (DSPLQSLSLADSKLKAEVTIIINA), 574 to 597 (NTSLTKVDISGNGMGDMGAKMLAK), and 658 to 682 (LQKIENYLLRNHETRKYLQEQAYRL). The stretch at 714–738 (GDAIQEDLKAAERLMRDAKNSKTLL) forms a coiled coil. Threonine 920 is modified (phosphothreonine). 2 disordered regions span residues 961-982 (PFPSVRQEKRSSGLISELPSEE) and 1040-1374 (KMDC…FIFV). The LRR 11 repeat unit spans residues 962 to 985 (FPSVRQEKRSSGLISELPSEEGRR). The segment at 962–1084 (FPSVRQEKRS…LIKSRSRSER (123 aa)) is inhibits capping activity of CP. At serine 972 the chain carries Phosphoserine. Residues 1040–1064 (KMDCKRSSSRSSDAHELGEGDEKKK) show a composition bias toward basic and acidic residues. A necessary for localization at the cell membrane region spans residues 1058-1092 (EGDEKKKRDSRRSGFLNLIKSRSRSERPPTVLMTE). At serine 1096 the chain carries Phosphoserine. 2 stretches are compositionally biased toward basic and acidic residues: residues 1108-1132 (TTRKEIKAAEHNGAPDRTEEIKTPE) and 1141-1150 (EAGRAERSDS). The segment covering 1191 to 1204 (VISQDPSSPVSCNT) has biased composition (polar residues). Threonine 1229 bears the Phosphothreonine mark. Basic and acidic residues predominate over residues 1232–1244 (KNAKAEPRVDGGC). A compositionally biased stretch (low complexity) spans 1245-1263 (RSRSSSSMPTSPKPLLQSP). Serine 1281, serine 1289, serine 1291, serine 1295, serine 1319, serine 1328, and serine 1335 each carry phosphoserine. The segment covering 1317-1330 (QNSSQSSPRSFSQE) has biased composition (low complexity). Positions 1343 to 1356 (QEQKQRSSGKDGHQ) are enriched in basic and acidic residues. At serine 1363 the chain carries Phosphoserine.

Belongs to the CARMIL family. In terms of assembly, homodimer. Interacts (via C-terminus) with heterodimeric capping protein (CP); this interaction uncaps barbed ends capped by CP, enhances barbed-end actin polymerization and promotes lamellipodial formation and cell migration. Interacts with MYO1E. Interacts with TRIO.

Its subcellular location is the cytoplasm. It is found in the cytoskeleton. It localises to the cell membrane. The protein resides in the cell projection. The protein localises to the lamellipodium. In terms of biological role, cell membrane-cytoskeleton-associated protein that plays a role in the regulation of actin polymerization at the barbed end of actin filaments. Prevents F-actin heterodimeric capping protein (CP) activity at the leading edges of migrating cells, and hence generates uncapped barbed ends and enhances actin polymerization, however, seems unable to nucleate filaments. Plays a role in lamellipodial protrusion formations and cell migration. The sequence is that of F-actin-uncapping protein LRRC16A from Mus musculus (Mouse).